Reading from the N-terminus, the 511-residue chain is GATA zinc finger domain-containing protein 15 (511 aa).

A compositionally biased stretch (low complexity) spans 1 to 111 (TNNNNFNNIN…FNDNCNNNSN (111 aa)). Disordered regions lie at residues 1–194 (TNNN…NTFF), 214–313 (NVNN…NENK), and 325–355 (NLQYSPPPFQLDSGSTTPKTPSAPTSPVLSP). Residues 124 to 135 (SLQNINQYPLSP) are compositionally biased toward polar residues. Over residues 136-166 (NNNKSSNQHLSHSSSNVNSQYYQTPYYQPSQ) the composition is skewed to low complexity. Polar residues predominate over residues 167-185 (KQNSPNSTPPLNGCQYENH). 2 stretches are compositionally biased toward low complexity: residues 214 to 309 (NVNN…NNDN) and 337 to 351 (SGSTTPKTPSAPTSP). A GATA-type zinc finger spans residues 453-478 (CQACGTRASPEWRKGPDGFKSLCNAC).

The chain is GATA zinc finger domain-containing protein 15 (gtaO) from Dictyostelium discoideum (Social amoeba).